A 366-amino-acid chain; its full sequence is UDP-N-acetylglucosamine--N-acetylmuramyl-(pentapeptide) pyrophosphoryl-undecaprenol N-acetylglucosamine transferase (366 aa).

UDP-N-acetyl-alpha-D-glucosamine contacts are provided by residues 14-16 (TGG), Asn125, Arg168, Ser196, and Gln297.

This sequence belongs to the glycosyltransferase 28 family. MurG subfamily.

It is found in the cell inner membrane. The enzyme catalyses di-trans,octa-cis-undecaprenyl diphospho-N-acetyl-alpha-D-muramoyl-L-alanyl-D-glutamyl-meso-2,6-diaminopimeloyl-D-alanyl-D-alanine + UDP-N-acetyl-alpha-D-glucosamine = di-trans,octa-cis-undecaprenyl diphospho-[N-acetyl-alpha-D-glucosaminyl-(1-&gt;4)]-N-acetyl-alpha-D-muramoyl-L-alanyl-D-glutamyl-meso-2,6-diaminopimeloyl-D-alanyl-D-alanine + UDP + H(+). The protein operates within cell wall biogenesis; peptidoglycan biosynthesis. Functionally, cell wall formation. Catalyzes the transfer of a GlcNAc subunit on undecaprenyl-pyrophosphoryl-MurNAc-pentapeptide (lipid intermediate I) to form undecaprenyl-pyrophosphoryl-MurNAc-(pentapeptide)GlcNAc (lipid intermediate II). This chain is UDP-N-acetylglucosamine--N-acetylmuramyl-(pentapeptide) pyrophosphoryl-undecaprenol N-acetylglucosamine transferase, found in Rhodopseudomonas palustris (strain HaA2).